The following is a 641-amino-acid chain: Tegument protein UL35 (641 aa).

Disordered regions lie at residues 353-373 (ERGE…PREA), 500-572 (ASSS…PRQR), and 587-641 (AYSH…LRHL). The segment covering 358–367 (GDEDEEQEND) has biased composition (acidic residues). Positions 500–563 (ASSSSASSSS…LSGSHGISSA (64 aa)) are enriched in low complexity. Residues 589–599 (SHHRRHRRRRS) show a composition bias toward basic residues. Over residues 632–641 (DDLAENLRHL) the composition is skewed to basic and acidic residues.

It belongs to the herpesviridae pp85 family. Interacts with UL82. Interacts with isoform UL35A. Interacts with host UBP7; this interaction significantly inhibits the ability of USP7 to form nuclear bodies. Interacts with host DCAF1 (via C-terminus). Interacts with host SNX5; this interaction allows proper gB localization during viral assembly. Interacts with host TBK1; this interaction prevents type I interferon production. In terms of assembly, interacts with UL82. Interacts with isoform UL35. Interacts with host UBP7; this interaction significantly inhibits the ability of USP7 to form nuclear bodies. Interacts with host SNX5; this interaction allows proper gB localization during viral assembly.

It localises to the virion tegument. The protein localises to the host nucleus. Its subcellular location is the host cytoplasm. Its function is as follows. Plays important role in immediate-early gene expression through interaction with UL82. Forms nuclear bodies in host nucleus, independently of PML. In turn, UL35 nuclear bodies associate with and remodel PML bodies. Through interaction with host DCAF1, causes cells to accumulate in the G2 phase of the cell cycle by inducing a DNA damage response. Regulates viral assembly by controlling the localization of the essential gB through regulation of a retrograde transport pathway. This modulation occurs via binding and inhibition of host sorting nexin 5/SNX5. Also plays a role in the inhibition of pattern recognition receptor-mediated type I interferon signaling at the level of TBK1. Functionally, promotes cytoplasmic UL82 accumulation and inhibits UL35-containing nuclear bodies formation. Regulates viral assembly by controlling the localization of the essential gB through regulation of a retrograde transport pathway. This modulation occurs via binding and inhibition of host sorting nexin 5/SNX5. The protein is Tegument protein UL35 (UL35) of Homo sapiens (Human).